The chain runs to 212 residues: Suppressor of cytokine signaling 1 (212 aa).

The interval 1 to 55 (MVARNQVAADNAISPAAEPRRRSEPSSSSSSSSPAAPVRPRPCPAVPAPAPGDTH) is disordered. Residues 25–36 (PSSSSSSSSPAA) show a composition bias toward low complexity. The span at 37–50 (PVRPRPCPAVPAPA) shows a compositional bias: pro residues. Residues 56–67 (FRTFRSHSDYRR) are kinase inhibitory region (KIR). The segment at 68 to 79 (ITRTSALLDACG) is extended SH2 subdomain (ESS). The SH2 domain occupies 80 to 175 (FYWGPLSVHG…PLRQRRVRPL (96 aa)). Residues 162–211 (MLGAPLRQRRVRPLQELCRQRIVAAVGRENLARIPLNPVLRDYLSSFPFQ) form the SOCS box domain. An interaction with Elongin BC complex region spans residues 174-183 (PLQELCRQRI).

It belongs to the SOCS1 family. As to quaternary structure, interacts with multiple activated proteins of the tyrosine kinase signaling pathway including JAK family kinases, TEC, KIT, GRB2 and VAV. Binding to JAKs is mediated through the KIR and SH2 domain to a phosphorylated tyrosine residue within the JAK JH1 domain. Binds the SH3 domain of GRB2 via diproline determinants in the N-terminus, and the N-terminal regulatory domain of VAV. Interacts with the Elongin BC complex (ELOB and ELOC). Component of an ECS CBC(SOCS1) E3 ubiquitin-protein ligase complex which contains Elongin BC, CUL5, RBX1 and SOCS1. Interacts (via SH2 domain and SOCS box) with TRIM8. Interacts with CUL2. Interacts with AXL and FGFR3. Interacts with INSR. Interacts with TRIM8. Interacts with DCUN1D1. Interacts with IFNGR1. High expression in thymus. Lower expression in lung and spleen. Expressed in both Th1 and Th2 cells.

The protein localises to the nucleus. It is found in the cytoplasmic vesicle. It functions in the pathway protein modification; protein ubiquitination. Its function is as follows. Essential negative regulator of type I and type II interferon (IFN) signaling, as well as that of other cytokines, including IL2, IL4, IL6 and leukemia inhibitory factor (LIF). Downregulates cytokine signaling by inhibiting the JAK/STAT signaling pathway. Acts by binding to JAK proteins and to IFNGR1 and inhibiting their kinase activity. In vitro, suppresses Tec protein-tyrosine activity. Regulates IFN-gamma (IFNG)-mediated sensory neuron survival. Probable substrate recognition component of an ECS (Elongin BC-CUL2/5-SOCS-box protein) E3 ubiquitin ligase complex which mediates the ubiquitination and subsequent proteasomal degradation of target proteins. The sequence is that of Suppressor of cytokine signaling 1 from Mus musculus (Mouse).